The following is a 493-amino-acid chain: Probable cytosol aminopeptidase (493 aa).

The Mn(2+) site is built by K258 and D263. The active site involves K270. Mn(2+)-binding residues include D281, D340, and E342. R344 is a catalytic residue.

This sequence belongs to the peptidase M17 family. It depends on Mn(2+) as a cofactor.

It is found in the cytoplasm. It carries out the reaction Release of an N-terminal amino acid, Xaa-|-Yaa-, in which Xaa is preferably Leu, but may be other amino acids including Pro although not Arg or Lys, and Yaa may be Pro. Amino acid amides and methyl esters are also readily hydrolyzed, but rates on arylamides are exceedingly low.. The enzyme catalyses Release of an N-terminal amino acid, preferentially leucine, but not glutamic or aspartic acids.. Functionally, presumably involved in the processing and regular turnover of intracellular proteins. Catalyzes the removal of unsubstituted N-terminal amino acids from various peptides. The polypeptide is Probable cytosol aminopeptidase (Caulobacter vibrioides (strain ATCC 19089 / CIP 103742 / CB 15) (Caulobacter crescentus)).